Reading from the N-terminus, the 474-residue chain is Tubulin gamma-2 chain (474 aa).

142 to 148 is a GTP binding site; sequence AGGTGSG.

It belongs to the tubulin family. In terms of assembly, gamma-tubulin complex is composed of gamma-tubulin and GCP proteins.

It localises to the cytoplasm. Its subcellular location is the cytoskeleton. It is found in the microtubule organizing center. The protein localises to the nucleus. The protein resides in the cell cortex. In terms of biological role, tubulin is the major constituent of microtubules. The gamma chain is found at microtubule organizing centers (MTOC) such as the spindle poles, suggesting that it is involved in the minus-end nucleation of microtubule assembly. Functionally, gamma-tubulin complex is essential for the control of microtubular network remodeling in the course of initiation and development of giant-feeding cells, and for the successful reproduction of nematodes (e.g. Meloidogyne spp.) in their plant hosts. This Arabidopsis thaliana (Mouse-ear cress) protein is Tubulin gamma-2 chain (TUBG2).